The sequence spans 77 residues: uncharacterized protein (77 aa).

One can recognise an HTH cro/C1-type domain in the interval 11-65; sequence FARLRREKGLTQEEVEARSGFSQQYLSSLERGRRNPTVITLYELAQALGVSHVEL. Residues 22–41 constitute a DNA-binding region (H-T-H motif); the sequence is QEEVEARSGFSQQYLSSLER.

This is an uncharacterized protein from Sinorhizobium fredii (strain NBRC 101917 / NGR234).